An 88-amino-acid polypeptide reads, in one-letter code: Large ribosomal subunit protein bL27 (88 aa).

The interval 1–23 (MAHKKAGGSSRNGRDSAGRRLGV) is disordered.

It belongs to the bacterial ribosomal protein bL27 family.

This chain is Large ribosomal subunit protein bL27, found in Methylorubrum extorquens (strain CM4 / NCIMB 13688) (Methylobacterium extorquens).